The primary structure comprises 423 residues: Gamma-glutamyl phosphate reductase (423 aa).

It belongs to the gamma-glutamyl phosphate reductase family.

Its subcellular location is the cytoplasm. It carries out the reaction L-glutamate 5-semialdehyde + phosphate + NADP(+) = L-glutamyl 5-phosphate + NADPH + H(+). It participates in amino-acid biosynthesis; L-proline biosynthesis; L-glutamate 5-semialdehyde from L-glutamate: step 2/2. In terms of biological role, catalyzes the NADPH-dependent reduction of L-glutamate 5-phosphate into L-glutamate 5-semialdehyde and phosphate. The product spontaneously undergoes cyclization to form 1-pyrroline-5-carboxylate. The protein is Gamma-glutamyl phosphate reductase of Burkholderia pseudomallei (strain 1710b).